A 66-amino-acid chain; its full sequence is Large ribosomal subunit protein bL33c (66 aa).

The protein belongs to the bacterial ribosomal protein bL33 family.

The protein resides in the plastid. It localises to the chloroplast. This chain is Large ribosomal subunit protein bL33c, found in Gossypium barbadense (Sea Island cotton).